The sequence spans 251 residues: Hydroxyacylglutathione hydrolase (251 aa).

Residues His-53, His-55, Asp-57, His-58, His-110, Asp-127, and His-165 each contribute to the Zn(2+) site.

The protein belongs to the metallo-beta-lactamase superfamily. Glyoxalase II family. In terms of assembly, monomer. It depends on Zn(2+) as a cofactor.

It carries out the reaction an S-(2-hydroxyacyl)glutathione + H2O = a 2-hydroxy carboxylate + glutathione + H(+). It functions in the pathway secondary metabolite metabolism; methylglyoxal degradation; (R)-lactate from methylglyoxal: step 2/2. In terms of biological role, thiolesterase that catalyzes the hydrolysis of S-D-lactoyl-glutathione to form glutathione and D-lactic acid. The protein is Hydroxyacylglutathione hydrolase of Enterobacter sp. (strain 638).